Here is a 410-residue protein sequence, read N- to C-terminus: Proteasome-activating nucleotidase (410 aa).

Residues 1 to 70 (MENNSQNVLK…LRGEIERFRT (70 aa)) are a coiled coil. Residues 195–200 (GTGKTL) and H334 contribute to the ATP site. The tract at residues 408-410 (MFG) is docks into pockets in the proteasome alpha-ring to cause gate opening.

This sequence belongs to the AAA ATPase family. As to quaternary structure, homohexamer. The hexameric complex has a two-ring architecture resembling a top hat that caps the 20S proteasome core at one or both ends. Upon ATP-binding, the C-terminus of PAN interacts with the alpha-rings of the proteasome core by binding to the intersubunit pockets.

It localises to the cytoplasm. Its function is as follows. ATPase which is responsible for recognizing, binding, unfolding and translocation of substrate proteins into the archaeal 20S proteasome core particle. Is essential for opening the gate of the 20S proteasome via an interaction with its C-terminus, thereby allowing substrate entry and access to the site of proteolysis. Thus, the C-termini of the proteasomal ATPase function like a 'key in a lock' to induce gate opening and therefore regulate proteolysis. Unfolding activity requires energy from ATP hydrolysis, whereas ATP binding alone promotes ATPase-20S proteasome association which triggers gate opening, and supports translocation of unfolded substrates. The chain is Proteasome-activating nucleotidase from Methanothermobacter thermautotrophicus (strain ATCC 29096 / DSM 1053 / JCM 10044 / NBRC 100330 / Delta H) (Methanobacterium thermoautotrophicum).